An 887-amino-acid chain; its full sequence is Beta-galactosidase 14 (887 aa).

An N-terminal signal peptide occupies residues 1-31 (MSKSSRIRMKSRTRYLIAILLVISLCSKASS). E197 acts as the Proton donor in catalysis. E268 serves as the catalytic Nucleophile. N-linked (GlcNAc...) asparagine glycans are attached at residues N269, N300, N395, and N785. The SUEL-type lectin domain maps to 752–838 (KDMRLKAVMR…KTLAVQVKCE (87 aa)). Over residues 838–852 (EKKEGKQDEKKKKED) the composition is skewed to basic and acidic residues. A disordered region spans residues 838–887 (EKKEGKQDEKKKKEDKDEEEEDDEDDDEEEEEEDKENKDTKDMENKNQDM). Positions 853–871 (KDEEEEDDEDDDEEEEEED) are enriched in acidic residues. Basic and acidic residues predominate over residues 872 to 887 (KENKDTKDMENKNQDM).

This sequence belongs to the glycosyl hydrolase 35 family.

It localises to the secreted. The protein resides in the extracellular space. Its subcellular location is the apoplast. The catalysed reaction is Hydrolysis of terminal non-reducing beta-D-galactose residues in beta-D-galactosides.. This chain is Beta-galactosidase 14 (BGAL14), found in Arabidopsis thaliana (Mouse-ear cress).